We begin with the raw amino-acid sequence, 314 residues long: Pyridoxal 5'-phosphate synthase-like subunit PDX1.2 (314 aa).

Residue Ala-2 is modified to N-acetylalanine.

The protein belongs to the PdxS/SNZ family. Homodimer or heterodimer with PDX1.1 or PDX1.3. No interaction with PDX2. Expressed in callus tissues, flowers and roots. Weakly expressed in leaves and stems.

The protein localises to the cytoplasm. In terms of biological role, the protein has no function in the formation of pyridoxal 5'-phosphate. The chain is Pyridoxal 5'-phosphate synthase-like subunit PDX1.2 (PDX12) from Arabidopsis thaliana (Mouse-ear cress).